A 147-amino-acid polypeptide reads, in one-letter code: uncharacterized protein (147 aa).

The next 2 helical transmembrane spans lie at 35 to 55 and 62 to 82; these read TIQL…FGNH and IWLL…LFEP.

As to quaternary structure, has been detected in a cytochrome bc1-aa3 supercomplex; its deletion however leaves complex activity unaffected.

The protein localises to the cell membrane. This is an uncharacterized protein from Corynebacterium glutamicum (strain ATCC 13032 / DSM 20300 / JCM 1318 / BCRC 11384 / CCUG 27702 / LMG 3730 / NBRC 12168 / NCIMB 10025 / NRRL B-2784 / 534).